The following is a 213-amino-acid chain: Protein nullo (213 aa).

Blastoderm. Throughout the entire cortex of the embryo although the distribution is not uniform.

Actin-myosin network stability during cellularization. Might be involved in increasing actin-actin interactions or membrane-to-cytoskeleton attachments. nullo together with Sry-a and bnk may provide auxiliary functions, by acting both to stabilize a large and dynamic microfilament structure and regulate its functions. The protein is Protein nullo (nullo) of Drosophila melanogaster (Fruit fly).